The following is a 333-amino-acid chain: Sphingomyelinase C (333 aa).

The first 27 residues, 1 to 27 (MKGKLLKGVLSFGIGLGVLYGGSSVQA), serve as a signal peptide directing secretion. Cysteine 150 and cysteine 186 are disulfide-bonded.

The protein belongs to the neutral sphingomyelinase family. Mg(2+) is required as a cofactor.

The protein localises to the secreted. It catalyses the reaction a sphingomyelin + H2O = phosphocholine + an N-acylsphing-4-enine + H(+). Activated by cobalt and manganese ions. Functionally, required, with sphingomyelinase, to effect target cell lysis (hemolysis). The polypeptide is Sphingomyelinase C (sph) (Bacillus cereus).